The following is a 299-amino-acid chain: Mitochondrial 2-oxodicarboxylate carrier (299 aa).

3 Solcar repeats span residues 11–100 (REAS…YKKL), 107–196 (SPAL…VKNM), and 205–294 (LEFW…TYSW). 6 consecutive transmembrane segments (helical) span residues 17-37 (IVAG…LDVV), 70-89 (FGFY…KRAV), 113-133 (AIAG…FEVV), 167-187 (GLNK…MVYF), 205-225 (LEFW…SVIN), and 277-297 (LGPG…WLQE).

Belongs to the mitochondrial carrier (TC 2.A.29) family. In terms of tissue distribution, expressed in placenta, gall bladder and colon.

It is found in the mitochondrion inner membrane. The enzyme catalyses 2-oxoadipate(in) + 2-oxoglutarate(out) = 2-oxoadipate(out) + 2-oxoglutarate(in). It carries out the reaction hexanedioate(in) + 2-oxoglutarate(out) = hexanedioate(out) + 2-oxoglutarate(in). It catalyses the reaction L-2-aminoadipate(in) + 2-oxoglutarate(out) = L-2-aminoadipate(out) + 2-oxoglutarate(in). The catalysed reaction is glutarate(in) + 2-oxoglutarate(out) = glutarate(out) + 2-oxoglutarate(in). The enzyme catalyses 2-oxoheptanedioate(in) + 2-oxoglutarate(out) = 2-oxoheptanedioate(out) + 2-oxoglutarate(in). It carries out the reaction heptanedioate(in) + 2-oxoglutarate(out) = heptanedioate(out) + 2-oxoglutarate(in). It catalyses the reaction citrate(in) + 2-oxoglutarate(out) = citrate(out) + 2-oxoglutarate(in). Transports dicarboxylates across the inner membranes of mitochondria by a counter-exchange mechanism. Can transport 2-oxoadipate (2-oxohexanedioate), 2-oxoglutarate, adipate (hexanedioate), glutarate, and to a lesser extent, pimelate (heptanedioate), 2-oxopimelate (2-oxoheptanedioate), 2-aminoadipate (2-aminohexanedioate), oxaloacetate, and citrate. Plays a central role in catabolism of lysine, hydroxylysine, and tryptophan, by transporting common metabolite intermediates (such as 2-oxoadipate) into the mitochondria, where it is converted into acetyl-CoA and can enter the citric acid (TCA) cycle. The protein is Mitochondrial 2-oxodicarboxylate carrier (SLC25A21) of Homo sapiens (Human).